The primary structure comprises 778 residues: Putative ATP-dependent RNA helicase MJ1505 (778 aa).

Residues 22 to 186 (IAANALKKKT…EICENLGIEH (165 aa)) enclose the Helicase ATP-binding domain. An ATP-binding site is contributed by 35–42 (LSTGLGKT). Positions 137-140 (DEAH) match the DEAH box motif. Residues 338 to 516 (KVVDMVKNIL…EIKEETEEIK (179 aa)) enclose the Helicase C-terminal domain.

Belongs to the DEAD box helicase family. DEAH subfamily.

It catalyses the reaction ATP + H2O = ADP + phosphate + H(+). The chain is Putative ATP-dependent RNA helicase MJ1505 from Methanocaldococcus jannaschii (strain ATCC 43067 / DSM 2661 / JAL-1 / JCM 10045 / NBRC 100440) (Methanococcus jannaschii).